The following is a 407-amino-acid chain: Flagellar calcium-binding protein TB-44A (407 aa).

The interval M1–T27 is disordered. The tract at residues K25–E399 is 2 X 186 AA almost perfect repeats. Residues E48 to L83 form the EF-hand 1 domain. D61, N63, T65, K67, and E72 together coordinate Ca(2+). An ancestral calcium site 2 region spans residues G110–E121. 3 consecutive EF-hand domains span residues Y130–W165, V167–Q202, and E237–L272. Residues D143, D145, S147, E154, D180, N182, S184, E191, D250, N252, T254, K256, and E261 each coordinate Ca(2+). Residues G299–E310 are ancestral calcium site 6. 2 consecutive EF-hand domains span residues Y319–W354 and V356–Q391. The Ca(2+) site is built by D332, D334, S336, E343, D369, N371, S373, and E380.

Belongs to the calflagin family.

It localises to the cell projection. It is found in the cilium. The protein localises to the flagellum. Its function is as follows. May contribute to the rapid motility of the trypanosomes, playing a role either in flagellar structure or in calcium metabolism. Could alternate between a GDP-bound inactive form to a calcium/GTP-bound active form. In Trypanosoma brucei brucei, this protein is Flagellar calcium-binding protein TB-44A.